We begin with the raw amino-acid sequence, 513 residues long: ATP synthase subunit alpha (513 aa).

Residue 169–176 (GDRQTGKT) coordinates ATP.

This sequence belongs to the ATPase alpha/beta chains family. In terms of assembly, F-type ATPases have 2 components, CF(1) - the catalytic core - and CF(0) - the membrane proton channel. CF(1) has five subunits: alpha(3), beta(3), gamma(1), delta(1), epsilon(1). CF(0) has three main subunits: a(1), b(2) and c(9-12). The alpha and beta chains form an alternating ring which encloses part of the gamma chain. CF(1) is attached to CF(0) by a central stalk formed by the gamma and epsilon chains, while a peripheral stalk is formed by the delta and b chains.

Its subcellular location is the cell inner membrane. The enzyme catalyses ATP + H2O + 4 H(+)(in) = ADP + phosphate + 5 H(+)(out). Functionally, produces ATP from ADP in the presence of a proton gradient across the membrane. The alpha chain is a regulatory subunit. This chain is ATP synthase subunit alpha, found in Glaesserella parasuis serovar 5 (strain SH0165) (Haemophilus parasuis).